The chain runs to 835 residues: Phosphatidylinositol 4-kinase beta (835 aa).

Disordered stretches follow at residues 1–61 (MGDT…PLDV), 99–139 (SSAS…VRRR), and 267–341 (PSSQ…PVRL). Low complexity predominate over residues 19–59 (SPSTSTTSSLSLPSSPSSGPHPLTSSSPSTSEGLPTSSPPL). A PIK helical domain is found at 59-262 (LDVISEGLGE…GTKLRKLILS (204 aa)). Basic and acidic residues-rich tracts occupy residues 125 to 134 (ISEEEVEPIK) and 267 to 276 (PSSQRIRREV). Positions 277-288 (PQPPPPYPPPLH) are enriched in pro residues. Positions 311 to 332 (DATVSISLSSNLKRTASNPKVE) are enriched in polar residues. The region spanning 554–820 (EPWQEKVRRI…MVDGSMRSIT (267 aa)) is the PI3K/PI4K catalytic domain. The interval 560–566 (VRRIREG) is G-loop. The catalytic loop stretch occupies residues 687–695 (QVKDRHNGN). Residues 706–730 (HIDFGFILSSSPRNLGFETSAFKLT) form an activation loop region.

Belongs to the PI3/PI4-kinase family. Type III PI4K subfamily. Mg(2+) is required as a cofactor. The cofactor is Mn(2+). In terms of tissue distribution, expressed in the inner ear otic vesicles.

Its subcellular location is the endomembrane system. It localises to the mitochondrion outer membrane. The protein localises to the rough endoplasmic reticulum membrane. The enzyme catalyses a 1,2-diacyl-sn-glycero-3-phospho-(1D-myo-inositol) + ATP = a 1,2-diacyl-sn-glycero-3-phospho-(1D-myo-inositol 4-phosphate) + ADP + H(+). In terms of biological role, phosphorylates phosphatidylinositol (PI) in the first committed step in the production of the second messenger inositol-1,4,5,-trisphosphate (PIP). May play an important role the in inner ear development. This is Phosphatidylinositol 4-kinase beta (pi4kb) from Danio rerio (Zebrafish).